The following is a 355-amino-acid chain: Protein RecA (355 aa).

ATP is bound at residue Gly65 to Thr72. The segment at Ile333–Glu355 is disordered. The segment covering Lys336 to Glu347 has biased composition (basic and acidic residues).

This sequence belongs to the RecA family.

The protein resides in the cytoplasm. Functionally, can catalyze the hydrolysis of ATP in the presence of single-stranded DNA, the ATP-dependent uptake of single-stranded DNA by duplex DNA, and the ATP-dependent hybridization of homologous single-stranded DNAs. It interacts with LexA causing its activation and leading to its autocatalytic cleavage. This Staphylococcus carnosus (strain TM300) protein is Protein RecA.